Consider the following 766-residue polypeptide: MPDAIRQLTLANGLQLTLRHAPRLKRSAAALRVHAGSHDAPAKWPGLAHFLEHLFFLGTPRFPLEDGLMRYVQALGGQVNASTRERATDFFFEVPPNALGGGLERLCQMLAEPDLGIERQRREREVIHAEFIAWSRNPTAQQQFALLQSVSARHPLGAFHAGNRYTLALHDAAFQQALAGFHQRFYQGGQICLSLCGPQPLDELERLARQQAELFAAGERVPQILPPPLPAMASALTFTHQSLPSGAEHALELLIAYLEDSRPGTWLGALRERGWLRRFTAERLYAFAGQLLWHLDLKLSADACPDEASALLQGWFRFIRQADREQLNHQFGLLQHSRAHSASALELARRDSTGQPFAKLDTQGLQALGALLESLPGADHGDWQLLPVDPLLKADLPHAKAQPLPAALKISDQLPPARQFAALYLRWHVPSPMRQPLQRVLEQALAPLQERCDRASVQLQYSSAGEYWQLHCAGLPAAVLRAVEQALALMLKPPASCWLPCTALPPALIPIRALLKQLPDAVRGSLPPAVPACTLTQQQLDSLWLHTEWHGMAAGFEDTALKALGAALEQCPGQGSRPSPLPTWANHRWQHAQVPGSEHALLLFCPLPAAKEAAGRLLAQLLQGPVYQRLRVDLQLGYAVFSAFRQVEGVGGLLFGVQSPHTDQAQVLDHLLNLLRHGVTLDPAARQALAGQFDEPAMANADVAEWAWQTHLATQADRLDVLRRSILTTRQTDLDHLLSALLDPGSAWLCLANAAAPDTSWQGENR.

His-49 is a binding site for Zn(2+). Glu-52 serves as the catalytic Proton acceptor. Residues His-53 and Glu-130 each contribute to the Zn(2+) site.

Belongs to the peptidase M16 family. Requires Zn(2+) as cofactor.

The protein operates within cofactor biosynthesis; pyrroloquinoline quinone biosynthesis. Required for coenzyme pyrroloquinoline quinone (PQQ) biosynthesis. It is thought that this protein is a protease that cleaves peptides bond in a small peptide (gene pqqA), providing the glutamate and tyrosine residues which are necessary for the synthesis of PQQ. The chain is Coenzyme PQQ synthesis protein F (pqqF) from Pseudomonas putida (strain ATCC 47054 / DSM 6125 / CFBP 8728 / NCIMB 11950 / KT2440).